A 369-amino-acid chain; its full sequence is Putative 2-aminoethylphosphonate import ATP-binding protein PhnT (369 aa).

The region spanning Ile19–Leu250 is the ABC transporter domain. ATP is bound at residue Gly51 to Thr58.

This sequence belongs to the ABC transporter superfamily. 2-aminoethylphosphonate importer (TC 3.A.1.11.5) family.

It localises to the cell inner membrane. Its function is as follows. Probably part of the PhnSTUV complex (TC 3.A.1.11.5) involved in 2-aminoethylphosphonate import. Probably responsible for energy coupling to the transport system. The sequence is that of Putative 2-aminoethylphosphonate import ATP-binding protein PhnT (phnT) from Salmonella typhi.